We begin with the raw amino-acid sequence, 662 residues long: Sporulation protein RMD8 (662 aa).

3 disordered regions span residues 1–136, 286–320, and 346–406; these read MSYK…RTSK, YELETSGNNNNANQDTTTVPDHLPNPVGQQDSFNP, and LKKE…QNDF. Ser2 is subject to N-acetylserine. The span at 99-121 shows a compositional bias: basic and acidic residues; that stretch reads SARREERLSSSSSDRPRQYERLS. Polar residues predominate over residues 286–304; sequence YELETSGNNNNANQDTTTV. A compositionally biased stretch (low complexity) spans 383 to 395; it reads SSRSPASPSSIST. A helical transmembrane segment spans residues 630 to 647; that stretch reads VTWWFILVILFGVIFSLT.

This sequence belongs to the RMD1/sif2 family.

The protein localises to the membrane. Functionally, required for sporulation. This is Sporulation protein RMD8 (RMD8) from Saccharomyces cerevisiae (strain ATCC 204508 / S288c) (Baker's yeast).